Consider the following 388-residue polypeptide: MNLHEYQAKQLFSRYGLPAPAGFACSTPREAEEAASKIGQGPWVVKCQVHAGGRGKAGGVKVVNSKEEIRAFAEQWLGKRLVTYQTDANGQPVTQILVEAATDIAKELYLGAVVDRGTRRVVFMASTEGGVEIEKVAEETPELIHRAIIDPLTGPMPYQGRELAFKLGLKGKQVSQFAKIFMGLATIFLERDLALIEINPLVITKDDDLICLDGKLGVDSNALFRQPEMREMHDPSQEDPREAQAAQWELNYVALDGNIGCMVNGAGLAMGTMDIVKLHGGEPANFLDVGGGATKERVTEAFKIILSDENVSAVLVNIFGGIVRCDLIADGIIGAVEEVGVNVPVVVRLEGNNAELGTKKLADSGLNIIAAKSLTDAAKQVVAAAEAK.

The ATP-grasp domain occupies 9 to 244; it reads KQLFSRYGLP…PSQEDPREAQ (236 aa). Residues Lys46, 53–55, Glu99, Thr102, and Glu107 each bind ATP; that span reads GRG. The Mg(2+) site is built by Asn199 and Asp213. Substrate is bound by residues Asn264 and 321 to 323; that span reads GIV.

Belongs to the succinate/malate CoA ligase beta subunit family. Heterotetramer of two alpha and two beta subunits. Requires Mg(2+) as cofactor.

It catalyses the reaction succinate + ATP + CoA = succinyl-CoA + ADP + phosphate. The enzyme catalyses GTP + succinate + CoA = succinyl-CoA + GDP + phosphate. The protein operates within carbohydrate metabolism; tricarboxylic acid cycle; succinate from succinyl-CoA (ligase route): step 1/1. Functionally, succinyl-CoA synthetase functions in the citric acid cycle (TCA), coupling the hydrolysis of succinyl-CoA to the synthesis of either ATP or GTP and thus represents the only step of substrate-level phosphorylation in the TCA. The beta subunit provides nucleotide specificity of the enzyme and binds the substrate succinate, while the binding sites for coenzyme A and phosphate are found in the alpha subunit. This is Succinate--CoA ligase [ADP-forming] subunit beta from Proteus mirabilis (strain HI4320).